A 257-amino-acid chain; its full sequence is Ribosomal RNA small subunit methyltransferase J (257 aa).

S-adenosyl-L-methionine contacts are provided by residues 107–108 (RD), 123–124 (ER), and D177.

This sequence belongs to the methyltransferase superfamily. RsmJ family.

It is found in the cytoplasm. It carries out the reaction guanosine(1516) in 16S rRNA + S-adenosyl-L-methionine = N(2)-methylguanosine(1516) in 16S rRNA + S-adenosyl-L-homocysteine + H(+). In terms of biological role, specifically methylates the guanosine in position 1516 of 16S rRNA. The polypeptide is Ribosomal RNA small subunit methyltransferase J (Haemophilus influenzae (strain 86-028NP)).